Reading from the N-terminus, the 456-residue chain is Chromosomal replication initiator protein DnaA (456 aa).

Residues 1–83 (MTASLWQQCL…LRFDIGNRPH (83 aa)) form a domain I, interacts with DnaA modulators region. Positions 83–119 (HPVAIARAPARGAAPVNNLQKSWESKADAKPEPNHKS) are domain II. Residues 120–336 (NTNVNYTFEN…GALNRVIANA (217 aa)) form a domain III, AAA+ region region. Positions 164, 166, 167, and 168 each coordinate ATP. Residues 337-456 (NFTGRAINID…YSNLIRTLSS (120 aa)) are domain IV, binds dsDNA.

The protein belongs to the DnaA family. Oligomerizes as a right-handed, spiral filament on DNA at oriC.

The protein localises to the cytoplasm. Functionally, plays an essential role in the initiation and regulation of chromosomal replication. ATP-DnaA binds to the origin of replication (oriC) to initiate formation of the DNA replication initiation complex once per cell cycle. Binds the DnaA box (a 9 base pair repeat at the origin) and separates the double-stranded (ds)DNA. Forms a right-handed helical filament on oriC DNA; dsDNA binds to the exterior of the filament while single-stranded (ss)DNA is stabiized in the filament's interior. The ATP-DnaA-oriC complex binds and stabilizes one strand of the AT-rich DNA unwinding element (DUE), permitting loading of DNA polymerase. After initiation quickly degrades to an ADP-DnaA complex that is not apt for DNA replication. Binds acidic phospholipids. The chain is Chromosomal replication initiator protein DnaA from Aeromonas salmonicida (strain A449).